Consider the following 324-residue polypeptide: Probable pectinesterase A (324 aa).

An N-terminal signal peptide occupies residues 1 to 19 (MHGSLLKLALLSFSLGSSA). Glutamine 142 is a binding site for substrate. Aspartate 165 acts as the Proton donor in catalysis. The active-site Nucleophile is the aspartate 186. 2 residues coordinate substrate: arginine 246 and tryptophan 248. N-linked (GlcNAc...) asparagine glycosylation is present at asparagine 285.

Belongs to the pectinesterase family.

It localises to the secreted. The catalysed reaction is [(1-&gt;4)-alpha-D-galacturonosyl methyl ester](n) + n H2O = [(1-&gt;4)-alpha-D-galacturonosyl](n) + n methanol + n H(+). Its pathway is glycan metabolism; pectin degradation; 2-dehydro-3-deoxy-D-gluconate from pectin: step 1/5. Functionally, involved in maceration and soft-rotting of plant tissue. The polypeptide is Probable pectinesterase A (pmeA) (Aspergillus oryzae (strain ATCC 42149 / RIB 40) (Yellow koji mold)).